A 260-amino-acid chain; its full sequence is NH(3)-dependent NAD(+) synthetase (260 aa).

ATP is bound at residue 31–38; the sequence is GLSGGLDS. Residue aspartate 37 coordinates Mg(2+). Arginine 112 is a deamido-NAD(+) binding site. Position 132 (threonine 132) interacts with ATP. Glutamate 137 contacts Mg(2+). The ATP site is built by lysine 161 and serine 183.

The protein belongs to the NAD synthetase family. In terms of assembly, homodimer.

It catalyses the reaction deamido-NAD(+) + NH4(+) + ATP = AMP + diphosphate + NAD(+) + H(+). It functions in the pathway cofactor biosynthesis; NAD(+) biosynthesis; NAD(+) from deamido-NAD(+) (ammonia route): step 1/1. Functionally, catalyzes the ATP-dependent amidation of deamido-NAD to form NAD. Uses ammonia as a nitrogen source. The chain is NH(3)-dependent NAD(+) synthetase from Helicobacter pylori (strain J99 / ATCC 700824) (Campylobacter pylori J99).